The sequence spans 349 residues: MGSAIFEPGPLSLLNLACSNLTERYDGPSPLSASTPGPSPDRPGSATMSSPLSSPTGISYQSLLSGILPAAMFPYGYPPVGYMYPTGFPTLAAIQSGHLAFRQLVPTLPFNTVKSSEGQVKEVVSTQSQKKPLAFSIDSILRPDFGKETNEVKRRHASPHREEPKKKVQYIEQMKKKEEIKEEARTESRLSSSSKDSVPDNDKINPPLPPEASKWPAWVFCTRYSDRPSSGRSPRCRRMKKDKAITPDEKRPRTAFTAEQLSRLKHEFNENRYLTERRRQDLARELGLHENQIKIWFQNNRAKLKKSSGQKNPLALQLMAQGLYNHSTIPTEDDEDDEISSTSLQARIE.

Disordered stretches follow at residues 26–53, 146–210, 228–252, and 327–349; these read DGPSPLSASTPGPSPDRPGSATMSSPLS, GKET…PLPP, PSSGRSPRCRRMKKDKAITPDEKRP, and STIPTEDDEDDEISSTSLQARIE. Basic and acidic residues-rich tracts occupy residues 173–188 and 242–252; these read QMKKKEEIKEEARTES and DKAITPDEKRP. The homeobox DNA-binding region spans 249-308; that stretch reads EKRPRTAFTAEQLSRLKHEFNENRYLTERRRQDLARELGLHENQIKIWFQNNRAKLKKSS.

Belongs to the engrailed homeobox family.

It localises to the nucleus. This chain is Homeobox protein engrailed, found in Artemia franciscana (Brine shrimp).